Reading from the N-terminus, the 200-residue chain is 3-isopropylmalate dehydratase small subunit (200 aa).

Belongs to the LeuD family. LeuD type 1 subfamily. As to quaternary structure, heterodimer of LeuC and LeuD.

It carries out the reaction (2R,3S)-3-isopropylmalate = (2S)-2-isopropylmalate. It functions in the pathway amino-acid biosynthesis; L-leucine biosynthesis; L-leucine from 3-methyl-2-oxobutanoate: step 2/4. In terms of biological role, catalyzes the isomerization between 2-isopropylmalate and 3-isopropylmalate, via the formation of 2-isopropylmaleate. The polypeptide is 3-isopropylmalate dehydratase small subunit (Haemophilus influenzae (strain 86-028NP)).